A 419-amino-acid chain; its full sequence is Mitochondrial chaperone BCS1 (419 aa).

Over 1–15 (MPLSDFVLALKDNPY) the chain is Mitochondrial intermembrane. Residues 16–32 (FGAGFGLVGVGTALALA) traverse the membrane as a helical segment. Residues 33–419 (RKGAQLGLVA…AIQNAESLRR (387 aa)) are Mitochondrial matrix-facing. Residue Tyr181 is modified to Phosphotyrosine. 230–237 (GPPGCGKS) is an ATP binding site.

The protein belongs to the AAA ATPase family. BCS1 subfamily. In terms of assembly, interacts with LETM1.

It localises to the mitochondrion inner membrane. It carries out the reaction ATP + H2O = ADP + phosphate + H(+). Functionally, chaperone necessary for the incorporation of Rieske iron-sulfur protein UQCRFS1 into the mitochondrial respiratory chain complex III. Plays an important role in the maintenance of mitochondrial tubular networks, respiratory chain assembly and formation of the LETM1 complex. This chain is Mitochondrial chaperone BCS1 (BCS1L), found in Bos taurus (Bovine).